The primary structure comprises 445 residues: Phosphoglucosamine mutase (445 aa).

The Phosphoserine intermediate role is filled by Ser-102. The Mg(2+) site is built by Ser-102, Asp-241, Asp-243, and Asp-245. At Ser-102 the chain carries Phosphoserine.

Belongs to the phosphohexose mutase family. It depends on Mg(2+) as a cofactor. Post-translationally, activated by phosphorylation.

The enzyme catalyses alpha-D-glucosamine 1-phosphate = D-glucosamine 6-phosphate. In terms of biological role, catalyzes the conversion of glucosamine-6-phosphate to glucosamine-1-phosphate. The polypeptide is Phosphoglucosamine mutase (Novosphingobium aromaticivorans (strain ATCC 700278 / DSM 12444 / CCUG 56034 / CIP 105152 / NBRC 16084 / F199)).